Reading from the N-terminus, the 103-residue chain is N(4)-acetylcytidine amidohydrolase (103 aa).

The 96-residue stretch at 6–101 folds into the ASCH domain; the sequence is ITFFQRFQDD…QTQFYVIEFK (96 aa). The Proton acceptor role is filled by lysine 21. Threonine 24 (nucleophile) is an active-site residue. Residue glutamate 74 is the Proton donor of the active site.

This sequence belongs to the N(4)-acetylcytidine amidohydrolase family.

The enzyme catalyses N(4)-acetylcytidine + H2O = cytidine + acetate + H(+). It catalyses the reaction N(4)-acetyl-2'-deoxycytidine + H2O = 2'-deoxycytidine + acetate + H(+). It carries out the reaction N(4)-acetylcytosine + H2O = cytosine + acetate + H(+). Catalyzes the hydrolysis of N(4)-acetylcytidine (ac4C). The chain is N(4)-acetylcytidine amidohydrolase (yqfB) from Escherichia coli (strain K12 / MC4100 / BW2952).